Consider the following 562-residue polypeptide: Tubby-related protein 2 (562 aa).

The disordered stretch occupies residues 1–81 (MDREGPRGPR…RRGEERFQSD (81 aa)). Basic and acidic residues predominate over residues 35–46 (QKLEQQRQLFEK). 3 positions are modified to phosphoserine: Ser-152, Ser-153, and Ser-155. Positions 179–294 (LRRGWLASPG…SNHNAWNMTC (116 aa)) are disordered. Thr-211 is modified (phosphothreonine). Ser-213 bears the Phosphoserine mark. Residues 225–240 (DGDHGDLAPCKVEENT) are compositionally biased toward basic and acidic residues. The segment covering 285–294 (SNHNAWNMTC) has biased composition (polar residues).

This sequence belongs to the TUB family. Expressed in retina and testis.

Its subcellular location is the cytoplasm. The protein resides in the secreted. The sequence is that of Tubby-related protein 2 (Tulp2) from Mus musculus (Mouse).